The primary structure comprises 152 residues: Large ribosomal subunit protein bL9 (152 aa).

Belongs to the bacterial ribosomal protein bL9 family.

Functionally, binds to the 23S rRNA. The sequence is that of Large ribosomal subunit protein bL9 from Microcystis aeruginosa (strain NIES-843 / IAM M-2473).